We begin with the raw amino-acid sequence, 152 residues long: Superoxide dismutase [Cu-Zn] (152 aa).

Cu cation is bound by residues His-45, His-47, and His-62. Cys-56 and Cys-145 are oxidised to a cystine. Zn(2+) contacts are provided by His-62, His-70, His-79, and Asp-82. Residue His-119 participates in Cu cation binding.

Belongs to the Cu-Zn superoxide dismutase family. In terms of assembly, homodimer. Cu cation is required as a cofactor. Requires Zn(2+) as cofactor.

It localises to the cytoplasm. The enzyme catalyses 2 superoxide + 2 H(+) = H2O2 + O2. In terms of biological role, destroys radicals which are normally produced within the cells and which are toxic to biological systems. In Pisum sativum (Garden pea), this protein is Superoxide dismutase [Cu-Zn] (SODCC).